Consider the following 706-residue polypeptide: ATP-dependent zinc metalloprotease FtsH (706 aa).

The segment covering 1 to 17 has biased composition (polar residues); sequence MAKNSLKPSNPYNSEPE. Residues 1–20 form a disordered region; it reads MAKNSLKPSNPYNSEPETPQ. Residues 1 to 24 are Cytoplasmic-facing; sequence MAKNSLKPSNPYNSEPETPQPRPK. The helical transmembrane segment at 25–45 threads the bilayer; it reads LPMIYYVVVIALLIGLQLAFF. Over 46–142 the chain is Periplasmic; it reads WSGSSREIPY…RYEGSPGTTW (97 aa). The segment at 88–111 is disordered; the sequence is GLPKQEEGNDTTRKLLPGAKTPEN. The segment covering 91–100 has biased composition (basic and acidic residues); it reads KQEEGNDTTR. The helical transmembrane segment at 143–163 threads the bilayer; the sequence is ISELIQWVLPFALLFGLYFFI. At 164–706 the chain is on the cytoplasmic side; the sequence is FRRMGAGGPG…LRQSRNVSDN (543 aa). 239–246 is an ATP binding site; that stretch reads GPPGTGKT. Histidine 462 serves as a coordination point for Zn(2+). Glutamate 463 is an active-site residue. Histidine 466 and aspartate 539 together coordinate Zn(2+). The segment at 641–681 is disordered; that stretch reads RPGGQEEDSGEVDCSKKSAENGMVAHEPETTADAESTEKVG.

The protein in the central section; belongs to the AAA ATPase family. It in the C-terminal section; belongs to the peptidase M41 family. In terms of assembly, homohexamer. The cofactor is Zn(2+).

The protein resides in the cell inner membrane. Functionally, acts as a processive, ATP-dependent zinc metallopeptidase for both cytoplasmic and membrane proteins. Plays a role in the quality control of integral membrane proteins. This chain is ATP-dependent zinc metalloprotease FtsH, found in Chlorobium luteolum (strain DSM 273 / BCRC 81028 / 2530) (Pelodictyon luteolum).